A 217-amino-acid chain; its full sequence is Uracil-DNA glycosylase (217 aa).

The active-site Proton acceptor is the Asp-62.

It belongs to the uracil-DNA glycosylase (UDG) superfamily. UNG family.

It localises to the cytoplasm. It catalyses the reaction Hydrolyzes single-stranded DNA or mismatched double-stranded DNA and polynucleotides, releasing free uracil.. In terms of biological role, excises uracil residues from the DNA which can arise as a result of misincorporation of dUMP residues by DNA polymerase or due to deamination of cytosine. This chain is Uracil-DNA glycosylase, found in Streptococcus uberis (strain ATCC BAA-854 / 0140J).